The sequence spans 360 residues: Protein Wnt-2 (360 aa).

Positions 1–25 (MNAPLGGIWLWLPLLLTWLTPEVSS) are cleaved as a signal peptide. 11 cysteine pairs are disulfide-bonded: C76/C87, C127/C135, C137/C157, C206/C220, C208/C215, C278/C309, C294/C304, C308/C348, C324/C339, C326/C336, and C331/C332. S212 carries O-palmitoleoyl serine; by PORCN lipidation. The N-linked (GlcNAc...) asparagine glycan is linked to N295.

It belongs to the Wnt family. Palmitoleoylation is required for efficient binding to frizzled receptors. Depalmitoleoylation leads to Wnt signaling pathway inhibition.

It is found in the secreted. The protein localises to the extracellular space. Its subcellular location is the extracellular matrix. Ligand for members of the frizzled family of seven transmembrane receptors. Functions in the canonical Wnt signaling pathway that results in activation of transcription factors of the TCF/LEF family. The chain is Protein Wnt-2 (WNT2) from Dasypus novemcinctus (Nine-banded armadillo).